Here is a 514-residue protein sequence, read N- to C-terminus: Cytochrome P450 87A3 (514 aa).

Transmembrane regions (helical) follow at residues 36–56 (ASSM…VALL) and 315–335 (LMFV…TIGV). Cysteine 463 provides a ligand contact to heme.

The protein belongs to the cytochrome P450 family. It depends on heme as a cofactor. As to expression, expressed in roots and coleoptiles, but not in leaves.

The protein resides in the cytoplasmic vesicle membrane. This is Cytochrome P450 87A3 (CYP87A3) from Oryza sativa subsp. japonica (Rice).